We begin with the raw amino-acid sequence, 105 residues long: MLLLPGSHVKIVREVNKVPNIKSAMKRVELTRIRTLRNKAIKSSVKTAIKKFRTALEQGDNHNAAVNLRQAIRAIDKAVTKGVLHPNTAARKKSSLQRYFNKTTA.

This sequence belongs to the bacterial ribosomal protein bS20 family.

Functionally, binds directly to 16S ribosomal RNA. The protein is Small ribosomal subunit protein bS20 of Moorella thermoacetica (strain ATCC 39073 / JCM 9320).